Consider the following 959-residue polypeptide: Isoleucine--tRNA ligase (959 aa).

Residues 60–70 carry the 'HIGH' region motif; it reads PYANGSLHMGH. Position 569 (E569) interacts with L-isoleucyl-5'-AMP. Positions 610–614 match the 'KMSKS' region motif; the sequence is KMSKS. ATP is bound at residue K613. Residues C928, C931, C948, and C951 each coordinate Zn(2+).

It belongs to the class-I aminoacyl-tRNA synthetase family. IleS type 1 subfamily. In terms of assembly, monomer. Zn(2+) is required as a cofactor.

Its subcellular location is the cytoplasm. The enzyme catalyses tRNA(Ile) + L-isoleucine + ATP = L-isoleucyl-tRNA(Ile) + AMP + diphosphate. Catalyzes the attachment of isoleucine to tRNA(Ile). As IleRS can inadvertently accommodate and process structurally similar amino acids such as valine, to avoid such errors it has two additional distinct tRNA(Ile)-dependent editing activities. One activity is designated as 'pretransfer' editing and involves the hydrolysis of activated Val-AMP. The other activity is designated 'posttransfer' editing and involves deacylation of mischarged Val-tRNA(Ile). The chain is Isoleucine--tRNA ligase from Gloeothece citriformis (strain PCC 7424) (Cyanothece sp. (strain PCC 7424)).